Reading from the N-terminus, the 1162-residue chain is Lysine-specific demethylase 2A (1162 aa).

At Ser-28 the chain carries Phosphoserine. The region spanning Phe-148–Asp-316 is the JmjC domain. Thr-209 is a substrate binding site. His-212 and Asp-214 together coordinate Fe cation. Lys-229 provides a ligand contact to substrate. His-284 is a Fe cation binding site. Residues Gly-367–Arg-389 are disordered. Ser-390 and Ser-394 each carry phosphoserine. Residue Lys-505 forms a Glycyl lysine isopeptide (Lys-Gly) (interchain with G-Cter in SUMO2) linkage. The tract at residues Val-532–Ala-557 is disordered. Residue Thr-550 is modified to Phosphothreonine. Ser-558 is subject to Phosphoserine. Residues Ala-564–Leu-610 form a CXXC-type zinc finger. Residues Cys-571, Cys-574, Cys-577, Cys-582, Cys-585, Cys-588, Cys-604, Cys-609, Cys-620, and Cys-623 each coordinate Zn(2+). The PHD-type zinc finger occupies Ser-617–Glu-678. Thr-632 bears the Phosphothreonine mark. Cys-642, Cys-645, His-650, Cys-653, Cys-672, and Cys-675 together coordinate Zn(2+). At Ser-692 the chain carries Phosphoserine. The interval Pro-704–Val-789 is disordered. At Thr-713 the chain carries Phosphothreonine. Ser-718 and Ser-731 each carry phosphoserine. Composition is skewed to basic and acidic residues over residues Ser-746–Phe-757 and Thr-771–Val-789. 4 positions are modified to phosphoserine: Ser-825, Ser-832, Ser-869, and Ser-883. The interval His-839–Asp-887 is disordered. Residues Glu-851–Glu-871 are compositionally biased toward acidic residues. Residues Asp-889–Ser-936 enclose the F-box domain. LRR repeat units lie at residues Trp-961 to Leu-982 and Leu-984 to Trp-1010. Arg-1020 is subject to ADP-ribosylarginine. LRR repeat units lie at residues Gly-1048 to His-1073, Cys-1074 to Gly-1103, Cys-1104 to Gly-1128, and Cys-1129 to Lys-1156.

The protein belongs to the JHDM1 histone demethylase family. As to quaternary structure, interacts with CBX5/HP1A; the interaction promotes CBX5 localization to chromatin. The SKP1-KDM2A complex interacts with UBB. Part of a SCF (SKP1-cullin-F-box) protein ligase complex. The cofactor is Fe(2+). Post-translationally, mono-ADP-ribosylated at Arg-1020 in response to DNA damage, leading to displacement from chromatin, resulting in increased dimethylation of histone H3 at 'Lys-36'. As to expression, widely expressed, with highest levels in brain, testis and ovary, followed by lung.

It is found in the nucleus. Its subcellular location is the nucleoplasm. The protein resides in the chromosome. The catalysed reaction is N(6),N(6)-dimethyl-L-lysyl(36)-[histone H3] + 2 2-oxoglutarate + 2 O2 = L-lysyl(36)-[histone H3] + 2 formaldehyde + 2 succinate + 2 CO2. Its function is as follows. Histone demethylase that specifically demethylates 'Lys-36' of histone H3, thereby playing a central role in histone code. Preferentially demethylates dimethylated H3 'Lys-36' residue while it has weak or no activity for mono- and tri-methylated H3 'Lys-36'. May also recognize and bind to some phosphorylated proteins and promote their ubiquitination and degradation. Required to maintain the heterochromatic state. Associates with centromeres and represses transcription of small non-coding RNAs that are encoded by the clusters of satellite repeats at the centromere. Required to sustain centromeric integrity and genomic stability, particularly during mitosis. Regulates circadian gene expression by repressing the transcriptional activator activity of CLOCK-BMAL1 heterodimer and RORA in a catalytically-independent manner. The polypeptide is Lysine-specific demethylase 2A (KDM2A) (Homo sapiens (Human)).